A 369-amino-acid chain; its full sequence is S-(hydroxymethyl)glutathione dehydrogenase (369 aa).

Zn(2+) is bound by residues Cys-40, His-62, Cys-92, Cys-95, Cys-98, Cys-106, and Cys-169.

Belongs to the zinc-containing alcohol dehydrogenase family. Class-III subfamily. In terms of assembly, homodimer. The cofactor is Zn(2+).

The protein resides in the cytoplasm. The catalysed reaction is S-(hydroxymethyl)glutathione + NADP(+) = S-formylglutathione + NADPH + H(+). The enzyme catalyses S-(hydroxymethyl)glutathione + NAD(+) = S-formylglutathione + NADH + H(+). It catalyses the reaction a primary alcohol + NAD(+) = an aldehyde + NADH + H(+). It carries out the reaction a secondary alcohol + NAD(+) = a ketone + NADH + H(+). The catalysed reaction is S-nitrosoglutathione + NADH + H(+) = S-(hydroxysulfenamide)glutathione + NAD(+). In terms of biological role, has high formaldehyde dehydrogenase activity in the presence of glutathione and catalyzes the oxidation of normal alcohols in a reaction that is not GSH-dependent. In addition, hemithiolacetals other than those formed from GSH, including omega-thiol fatty acids, also are substrates. Also acts as a S-nitroso-glutathione reductase by catalyzing the NADH-dependent reduction of S-nitrosoglutathione. The chain is S-(hydroxymethyl)glutathione dehydrogenase (frmA) from Escherichia coli (strain SMS-3-5 / SECEC).